An 81-amino-acid chain; its full sequence is ATP synthase subunit c (81 aa).

Transmembrane regions (helical) follow at residues 4 to 24 (MIAQ…AIGA) and 57 to 77 (VGLV…FVFA).

The protein belongs to the ATPase C chain family. As to quaternary structure, F-type ATPases have 2 components, F(1) - the catalytic core - and F(0) - the membrane proton channel. F(1) has five subunits: alpha(3), beta(3), gamma(1), delta(1), epsilon(1). F(0) has three main subunits: a(1), b(2) and c(10-14). The alpha and beta chains form an alternating ring which encloses part of the gamma chain. F(1) is attached to F(0) by a central stalk formed by the gamma and epsilon chains, while a peripheral stalk is formed by the delta and b chains.

It localises to the cell membrane. In terms of biological role, f(1)F(0) ATP synthase produces ATP from ADP in the presence of a proton or sodium gradient. F-type ATPases consist of two structural domains, F(1) containing the extramembraneous catalytic core and F(0) containing the membrane proton channel, linked together by a central stalk and a peripheral stalk. During catalysis, ATP synthesis in the catalytic domain of F(1) is coupled via a rotary mechanism of the central stalk subunits to proton translocation. Key component of the F(0) channel; it plays a direct role in translocation across the membrane. A homomeric c-ring of between 10-14 subunits forms the central stalk rotor element with the F(1) delta and epsilon subunits. This is ATP synthase subunit c from Mycobacterium leprae (strain TN).